Consider the following 439-residue polypeptide: Acyl transferase 7 (439 aa).

The segment at 1–25 (MAAAAPDKAVERLSQKLVHPSSPTP) is disordered. Catalysis depends on proton acceptor residues His176 and Asp383.

The protein belongs to the plant acyltransferase family.

Involved in the incorporation of ferulate into the cell wall. May act as arabinoxylan feruloyl transferase. The chain is Acyl transferase 7 from Oryza sativa subsp. japonica (Rice).